We begin with the raw amino-acid sequence, 298 residues long: Probable endonuclease 4 (298 aa).

9 residues coordinate Zn(2+): His69, His111, Glu146, Asp180, His183, His215, Asp228, His230, and Glu260.

Belongs to the AP endonuclease 2 family. Zn(2+) is required as a cofactor.

The catalysed reaction is Endonucleolytic cleavage to 5'-phosphooligonucleotide end-products.. Endonuclease IV plays a role in DNA repair. It cleaves phosphodiester bonds at apurinic or apyrimidinic (AP) sites, generating a 3'-hydroxyl group and a 5'-terminal sugar phosphate. This Bacillus cereus (strain G9842) protein is Probable endonuclease 4.